The following is a 314-amino-acid chain: Methionyl-tRNA formyltransferase (314 aa).

Residue 112 to 115 (SLLP) participates in (6S)-5,6,7,8-tetrahydrofolate binding.

This sequence belongs to the Fmt family.

The catalysed reaction is L-methionyl-tRNA(fMet) + (6R)-10-formyltetrahydrofolate = N-formyl-L-methionyl-tRNA(fMet) + (6S)-5,6,7,8-tetrahydrofolate + H(+). In terms of biological role, attaches a formyl group to the free amino group of methionyl-tRNA(fMet). The formyl group appears to play a dual role in the initiator identity of N-formylmethionyl-tRNA by promoting its recognition by IF2 and preventing the misappropriation of this tRNA by the elongation apparatus. This chain is Methionyl-tRNA formyltransferase, found in Aeromonas salmonicida (strain A449).